The chain runs to 232 residues: Thiamine import ATP-binding protein ThiQ (232 aa).

The 229-residue stretch at L2–I230 folds into the ABC transporter domain. Residue G32–S39 participates in ATP binding.

This sequence belongs to the ABC transporter superfamily. Thiamine importer (TC 3.A.1.19.1) family. The complex is composed of two ATP-binding proteins (ThiQ), two transmembrane proteins (ThiP) and a solute-binding protein (ThiB).

It localises to the cell inner membrane. The catalysed reaction is thiamine(out) + ATP + H2O = thiamine(in) + ADP + phosphate + H(+). Its function is as follows. Part of the ABC transporter complex ThiBPQ involved in thiamine import. Responsible for energy coupling to the transport system. The sequence is that of Thiamine import ATP-binding protein ThiQ from Shigella boydii serotype 4 (strain Sb227).